The chain runs to 200 residues: Holliday junction branch migration complex subunit RuvA (200 aa).

A domain I region spans residues 1-63; that stretch reads MYAYIKGTLT…EDAQLLYGFI (63 aa). The segment at 64 to 142 is domain II; it reads NQEEKDMFLS…INDVDSSQIL (79 aa). The interval 143-149 is flexible linker; it reads NTDTQDH. The interval 150 to 200 is domain III; it reads ANAPIIKEALLALEALGYSKRELTKVEKSLSKETFDSVDDAVKRGLQLLIA.

This sequence belongs to the RuvA family. As to quaternary structure, homotetramer. Forms an RuvA(8)-RuvB(12)-Holliday junction (HJ) complex. HJ DNA is sandwiched between 2 RuvA tetramers; dsDNA enters through RuvA and exits via RuvB. An RuvB hexamer assembles on each DNA strand where it exits the tetramer. Each RuvB hexamer is contacted by two RuvA subunits (via domain III) on 2 adjacent RuvB subunits; this complex drives branch migration. In the full resolvosome a probable DNA-RuvA(4)-RuvB(12)-RuvC(2) complex forms which resolves the HJ.

The protein localises to the cytoplasm. Functionally, the RuvA-RuvB-RuvC complex processes Holliday junction (HJ) DNA during genetic recombination and DNA repair, while the RuvA-RuvB complex plays an important role in the rescue of blocked DNA replication forks via replication fork reversal (RFR). RuvA specifically binds to HJ cruciform DNA, conferring on it an open structure. The RuvB hexamer acts as an ATP-dependent pump, pulling dsDNA into and through the RuvAB complex. HJ branch migration allows RuvC to scan DNA until it finds its consensus sequence, where it cleaves and resolves the cruciform DNA. The chain is Holliday junction branch migration complex subunit RuvA from Staphylococcus saprophyticus subsp. saprophyticus (strain ATCC 15305 / DSM 20229 / NCIMB 8711 / NCTC 7292 / S-41).